The following is a 357-amino-acid chain: Chorismate synthase (357 aa).

NADP(+)-binding residues include arginine 48 and arginine 54. FMN is bound by residues 125–127, 243–244, glycine 283, 298–302, and arginine 324; these read RSS, NA, and KPTSS.

This sequence belongs to the chorismate synthase family. In terms of assembly, homotetramer. The cofactor is FMNH2.

It carries out the reaction 5-O-(1-carboxyvinyl)-3-phosphoshikimate = chorismate + phosphate. Its pathway is metabolic intermediate biosynthesis; chorismate biosynthesis; chorismate from D-erythrose 4-phosphate and phosphoenolpyruvate: step 7/7. Its function is as follows. Catalyzes the anti-1,4-elimination of the C-3 phosphate and the C-6 proR hydrogen from 5-enolpyruvylshikimate-3-phosphate (EPSP) to yield chorismate, which is the branch point compound that serves as the starting substrate for the three terminal pathways of aromatic amino acid biosynthesis. This reaction introduces a second double bond into the aromatic ring system. This chain is Chorismate synthase, found in Pasteurella multocida (strain Pm70).